A 167-amino-acid chain; its full sequence is Novel acetylcholine receptor chaperone (167 aa).

Residues 1-5 (MASPR) lie on the Cytoplasmic side of the membrane. A helical membrane pass occupies residues 6–26 (TVTIVALSVALGLFFVFMGTI). The Lumenal segment spans residues 27–61 (KLTPRLSKDAYSEMKRAYKSYVRALPLLKKMGINS). Residues 43-54 (AYKSYVRALPLL) are interaction with NGFR. Residues 62 to 82 (ILLRKSIGALEVACGIVMTLV) form a helical membrane-spanning segment. Over 83-88 (PGRPKD) the chain is Cytoplasmic. Residues 89–109 (VANFFLLLLVLAVLFFHQLVG) form a helical membrane-spanning segment. Residues 110–114 (DPLKR) are Lumenal-facing. A helical transmembrane segment spans residues 115–132 (YAHALVFGILLTCRLLIA). At 133 to 167 (RKPEDRSSEKKPLPGNAEEQPSLYEKAPQGKVKVS) the chain is on the cytoplasmic side. Residues 136–167 (EDRSSEKKPLPGNAEEQPSLYEKAPQGKVKVS) form a disordered region.

This sequence belongs to the DoxX family. In terms of assembly, may interact with NGFR. Interacts with RPN1, RPN2 and CANX.

It localises to the peroxisome membrane. Its subcellular location is the cytoplasmic vesicle. It is found in the endoplasmic reticulum membrane. Functionally, molecular chaperone which mediates the proper assembly and functional expression of the nicotinic acetylcholine receptors (nAChRs) throughout the brain. Essential for the proper folding, assembly, function and surface trafficking of alpha-7 (CHRNA7), alpha-4-beta-2, alpha-3-beta-2 and alpha-3-beta-4 receptors. Stably associates with ribophorin-1 (RPN1) and ribophorin-2 (RPN2) (components of the oligosaccharyl transferase (OST) complex) and with calnexin (CANX), both of which are critical for NACHO-mediated effects on CHRNA7 assembly and function. Facilitates the proper folding and assembly of alpha-6-beta-2 and alpha-6-beta-2-beta-3 receptors and acts at early stages of the nAChRs subunit assembly. Promotes the expression of the alpha-4(2):beta-2(3) stoichiometric form over the alpha-4(3):beta-2(2) form. In Macaca fascicularis (Crab-eating macaque), this protein is Novel acetylcholine receptor chaperone (TMEM35A).